A 176-amino-acid polypeptide reads, in one-letter code: ATP synthase subunit b (176 aa).

Residues 18–38 (GVEWGTVIVTVITFAILLALL) form a helical membrane-spanning segment.

Belongs to the ATPase B chain family. F-type ATPases have 2 components, F(1) - the catalytic core - and F(0) - the membrane proton channel. F(1) has five subunits: alpha(3), beta(3), gamma(1), delta(1), epsilon(1). F(0) has three main subunits: a(1), b(2) and c(10-14). The alpha and beta chains form an alternating ring which encloses part of the gamma chain. F(1) is attached to F(0) by a central stalk formed by the gamma and epsilon chains, while a peripheral stalk is formed by the delta and b chains.

The protein resides in the cell membrane. F(1)F(0) ATP synthase produces ATP from ADP in the presence of a proton or sodium gradient. F-type ATPases consist of two structural domains, F(1) containing the extramembraneous catalytic core and F(0) containing the membrane proton channel, linked together by a central stalk and a peripheral stalk. During catalysis, ATP synthesis in the catalytic domain of F(1) is coupled via a rotary mechanism of the central stalk subunits to proton translocation. In terms of biological role, component of the F(0) channel, it forms part of the peripheral stalk, linking F(1) to F(0). The polypeptide is ATP synthase subunit b (Staphylococcus haemolyticus (strain JCSC1435)).